The sequence spans 433 residues: MAIDASGAAAPNSSGITVIIVGLGPTGLAAAIECHRRGHKVICFERNPKSYRLGDLINVTGNAARVLQGWGNGSVINDLQAFQCNLDTLEVYDETGDLKLSAPYNANQAKDNYMLRRSRLLDIFLQHLKNLDVDIHLGTEVTDYWETESSAGVTVGGKRIAADCVVVADGVHSKGRPQVSAEPFDLPSTDGTAFRAFFHASEIAQDPEASWILQDAGEGDCFKTFYGKGLVMMLGTAENHEYIFWSCGSKENVLAQSSAVAQVLDLIGDWPVSKRLAPLISKTPSDNCLDQTLFTRSPLNKWVSRKGRMIVLGDAAHPFLPHAGQGANQGIEDAAVLALCLQIAGKDDVPLALRVTEKLRYQRVAAIQKRGVEARDQSLSVDWENGGFTKKLTLYPAWLHDQDCIKQVYEEFDKAVAAVTKGHECTFGGIPVD.

FAD-binding residues include glutamate 45 and arginine 117. Arginine 195 is a catalytic residue. FAD is bound by residues aspartate 314 and alanine 327.

Belongs to the paxM FAD-dependent monooxygenase family. Requires FAD as cofactor.

It functions in the pathway alkaloid biosynthesis. FAD-dependent monooxygenase; part of the gene cluster that mediates the biosynthesis of notoamide, a fungal indole alkaloid that belongs to a family of natural products containing a characteristic bicyclo[2.2.2]diazaoctane core. The first step of notoamide biosynthesis involves coupling of L-proline and L-tryptophan by the bimodular NRPS notE', to produce cyclo-L-tryptophan-L-proline called brevianamide F. The reverse prenyltransferase notF' then acts as a deoxybrevianamide E synthase and converts brevianamide F to deoxybrevianamide E via reverse prenylation at C-2 of the indole ring leading to the bicyclo[2.2.2]diazaoctane core. Deoxybrevianamide E is further hydroxylated at C-6 of the indole ring, likely catalyzed by the cytochrome P450 monooxygenase notG', to yield 6-hydroxy-deoxybrevianamide E. 6-hydroxy-deoxybrevianamide E is a specific substrate of the prenyltransferase notC' for normal prenylation at C-7 to produce 6-hydroxy-7-prenyl-deoxybrevianamide, also called notoamide S. As the proposed pivotal branching point in notoamide biosynthesis, notoamide S can be diverted to notoamide E through an oxidative pyran ring closure putatively catalyzed by either notH' cytochrome P450 monooxygenase or the notD' FAD-linked oxidoreductase. This step would be followed by an indole 2,3-epoxidation-initiated pinacol-like rearrangement catalyzed by the notB' FAD-dependent monooxygenase leading to the formation of notoamide C and notoamide D. On the other hand notoamide S is converted to notoamide T by notH' (or notD'), a bifunctional oxidase that also functions as the intramolecular Diels-Alderase responsible for generation of (-)-notoamide T. To generate antipodal (+)-notoaminide T, notH (or notD) in Aspergillus strain MF297-2 is expected to catalyze a Diels-Alder reaction leading to the opposite stereochemistry. The remaining oxidoreductase notD' (or notH') likely catalyzes the oxidative pyran ring formation to yield (-)-stephacidin A. The FAD-dependent monooxygenase notI' is highly similar to notB' and is predicted to catalyze a similar conversion from (-)-stephacidin A to (+)-notoamide B via the 2,3-epoxidation of (-)-stephacidin A followed by a pinacol-type rearrangement. Finally, it remains unclear which enzyme could be responsible for the final hydroxylation steps leading to notoamide A and sclerotiamide. In Aspergillus versicolor, this protein is FAD-dependent monooxygenase notI'.